Consider the following 309-residue polypeptide: Glutaminase (309 aa).

Substrate contacts are provided by Ser65, Asn117, Glu162, Asn169, Tyr193, Tyr245, and Val263.

The protein belongs to the glutaminase family. Homotetramer.

It carries out the reaction L-glutamine + H2O = L-glutamate + NH4(+). The polypeptide is Glutaminase (Bacillus mycoides (strain KBAB4) (Bacillus weihenstephanensis)).